Here is a 296-residue protein sequence, read N- to C-terminus: Elongation factor Ts (296 aa).

Residues 81–84 (TDFV) form an involved in Mg(2+) ion dislocation from EF-Tu region.

It belongs to the EF-Ts family.

It is found in the cytoplasm. Functionally, associates with the EF-Tu.GDP complex and induces the exchange of GDP to GTP. It remains bound to the aminoacyl-tRNA.EF-Tu.GTP complex up to the GTP hydrolysis stage on the ribosome. This chain is Elongation factor Ts, found in Ruthia magnifica subsp. Calyptogena magnifica.